The chain runs to 243 residues: tRNA pseudouridine synthase A (243 aa).

The active-site Nucleophile is aspartate 53. Tyrosine 111 is a substrate binding site.

This sequence belongs to the tRNA pseudouridine synthase TruA family. In terms of assembly, homodimer.

The catalysed reaction is uridine(38/39/40) in tRNA = pseudouridine(38/39/40) in tRNA. Functionally, formation of pseudouridine at positions 38, 39 and 40 in the anticodon stem and loop of transfer RNAs. The protein is tRNA pseudouridine synthase A of Chlorobium limicola (strain DSM 245 / NBRC 103803 / 6330).